We begin with the raw amino-acid sequence, 112 residues long: uncharacterized protein (112 aa).

Helical transmembrane passes span 7–26 (PSFH…TLDY) and 36–58 (TYMH…FFLY).

The protein resides in the membrane. This is an uncharacterized protein from Saccharomyces cerevisiae (strain ATCC 204508 / S288c) (Baker's yeast).